A 103-amino-acid chain; its full sequence is Large ribosomal subunit protein uL24 (103 aa).

The protein belongs to the universal ribosomal protein uL24 family. In terms of assembly, part of the 50S ribosomal subunit.

In terms of biological role, one of two assembly initiator proteins, it binds directly to the 5'-end of the 23S rRNA, where it nucleates assembly of the 50S subunit. Its function is as follows. One of the proteins that surrounds the polypeptide exit tunnel on the outside of the subunit. In Pediococcus pentosaceus (strain ATCC 25745 / CCUG 21536 / LMG 10740 / 183-1w), this protein is Large ribosomal subunit protein uL24.